A 442-amino-acid chain; its full sequence is tRNA-2-methylthio-N(6)-dimethylallyladenosine synthase (442 aa).

An MTTase N-terminal domain is found at 2-117 (KSLYIKTYGC…LPELIVKASR (116 aa)). C11, C47, C80, C157, C161, and C164 together coordinate [4Fe-4S] cluster. The 232-residue stretch at 143–374 (NSQGSSAFLS…QKLINKQQLE (232 aa)) folds into the Radical SAM core domain. In terms of domain architecture, TRAM spans 377-441 (QSMVGKTIPV…QNSLLGRELQ (65 aa)).

It belongs to the methylthiotransferase family. MiaB subfamily. Monomer. It depends on [4Fe-4S] cluster as a cofactor.

It is found in the cytoplasm. It carries out the reaction N(6)-dimethylallyladenosine(37) in tRNA + (sulfur carrier)-SH + AH2 + 2 S-adenosyl-L-methionine = 2-methylsulfanyl-N(6)-dimethylallyladenosine(37) in tRNA + (sulfur carrier)-H + 5'-deoxyadenosine + L-methionine + A + S-adenosyl-L-homocysteine + 2 H(+). Its function is as follows. Catalyzes the methylthiolation of N6-(dimethylallyl)adenosine (i(6)A), leading to the formation of 2-methylthio-N6-(dimethylallyl)adenosine (ms(2)i(6)A) at position 37 in tRNAs that read codons beginning with uridine. This is tRNA-2-methylthio-N(6)-dimethylallyladenosine synthase from Wolbachia sp. subsp. Brugia malayi (strain TRS).